The chain runs to 335 residues: 3-ketodihydrosphingosine reductase TSC10 (335 aa).

9 residues coordinate NADPH: G42, S44, S45, G46, R67, D68, K71, D95, and L96. The short motif at 42–46 (GGSSG) is the GXSXG element. An involved in homodimer formation region spans residues 141–207 (LKDGLDGVYW…RGLSDALRSE (67 aa)). The Proton acceptor role is filled by Y190. The NADP(+) site is built by Y190, K194, and I223. K194 serves as the catalytic Lowers pKa of active site Tyr. Residues 288–308 (TNNFLLDTLWLIVSSVGVPIW) form a helical membrane-spanning segment.

It belongs to the short-chain dehydrogenases/reductases (SDR) family. As to quaternary structure, homodimer; a minor portion forms homotetramers.

It is found in the endoplasmic reticulum membrane. The enzyme catalyses sphinganine + NADP(+) = 3-oxosphinganine + NADPH + H(+). The protein operates within lipid metabolism; sphingolipid metabolism. Catalyzes the reduction of 3'-oxosphinganine (3-ketodihydrosphingosine/KDS) to sphinganine (dihydrosphingosine/DHS), the second step of de novo sphingolipid biosynthesis. The sequence is that of 3-ketodihydrosphingosine reductase TSC10 (TSC10) from Cryptococcus neoformans var. neoformans serotype D (strain JEC21 / ATCC MYA-565) (Filobasidiella neoformans).